Consider the following 360-residue polypeptide: Protein MGF 360-2L (360 aa).

Belongs to the asfivirus MGF 360 family.

Its function is as follows. Plays a role in virus cell tropism, and may be required for efficient virus replication in macrophages. The sequence is that of Protein MGF 360-2L from Ornithodoros (relapsing fever ticks).